The primary structure comprises 430 residues: Asparagine--tRNA ligase (430 aa).

The protein belongs to the class-II aminoacyl-tRNA synthetase family. In terms of assembly, homodimer.

Its subcellular location is the cytoplasm. The enzyme catalyses tRNA(Asn) + L-asparagine + ATP = L-asparaginyl-tRNA(Asn) + AMP + diphosphate + H(+). The polypeptide is Asparagine--tRNA ligase (Bacillus licheniformis (strain ATCC 14580 / DSM 13 / JCM 2505 / CCUG 7422 / NBRC 12200 / NCIMB 9375 / NCTC 10341 / NRRL NRS-1264 / Gibson 46)).